A 372-amino-acid polypeptide reads, in one-letter code: tRNA-specific 2-thiouridylase MnmA (372 aa).

ATP is bound by residues 7 to 14 and M33; that span reads GLSGGVDS. The interval 104–106 is interaction with target base in tRNA; it reads NPD. C109 serves as the catalytic Nucleophile. Cysteines 109 and 202 form a disulfide. G134 contributes to the ATP binding site. The tract at residues 152-154 is interaction with tRNA; that stretch reads KDQ. Catalysis depends on C202, which acts as the Cysteine persulfide intermediate. Residues 310–311 are interaction with tRNA; that stretch reads RY.

The protein belongs to the MnmA/TRMU family.

The protein localises to the cytoplasm. The enzyme catalyses S-sulfanyl-L-cysteinyl-[protein] + uridine(34) in tRNA + AH2 + ATP = 2-thiouridine(34) in tRNA + L-cysteinyl-[protein] + A + AMP + diphosphate + H(+). Functionally, catalyzes the 2-thiolation of uridine at the wobble position (U34) of tRNA, leading to the formation of s(2)U34. The protein is tRNA-specific 2-thiouridylase MnmA of Mesomycoplasma hyopneumoniae (strain 7448) (Mycoplasma hyopneumoniae).